Consider the following 567-residue polypeptide: Proline--tRNA ligase (567 aa).

It belongs to the class-II aminoacyl-tRNA synthetase family. ProS type 1 subfamily. Homodimer.

Its subcellular location is the cytoplasm. The enzyme catalyses tRNA(Pro) + L-proline + ATP = L-prolyl-tRNA(Pro) + AMP + diphosphate. Its function is as follows. Catalyzes the attachment of proline to tRNA(Pro) in a two-step reaction: proline is first activated by ATP to form Pro-AMP and then transferred to the acceptor end of tRNA(Pro). As ProRS can inadvertently accommodate and process non-cognate amino acids such as alanine and cysteine, to avoid such errors it has two additional distinct editing activities against alanine. One activity is designated as 'pretransfer' editing and involves the tRNA(Pro)-independent hydrolysis of activated Ala-AMP. The other activity is designated 'posttransfer' editing and involves deacylation of mischarged Ala-tRNA(Pro). The misacylated Cys-tRNA(Pro) is not edited by ProRS. The polypeptide is Proline--tRNA ligase (Streptomyces coelicolor (strain ATCC BAA-471 / A3(2) / M145)).